The sequence spans 360 residues: Ankyrin repeat domain-containing protein 2 (360 aa).

A may mediate interaction with PML, p53/TP53 and YBX1 region spans residues 5 to 120 (PSWAGVGALA…GIQNLIELRK (116 aa)). Serine 99 carries the phosphoserine; by PKB/AKT2 modification. The tract at residues 126 to 147 (KRDALAASHEPPPEPEEITGPV) is disordered. Residues 138-147 (PEPEEITGPV) show a composition bias toward acidic residues. ANK repeat units follow at residues 147 to 176 (VDEE…SADT), 180 to 209 (FRRT…TVDF), 213 to 242 (LDCT…DTNV), 246 to 275 (LLST…EINA), and 279 to 308 (EGDT…DMMT). The segment covering 330-342 (ALEHPEPGAEHNG) has biased composition (basic and acidic residues). The interval 330-360 (ALEHPEPGAEHNGLEGPNDSGRETPQPVPAQ) is disordered.

Interacts with ID3; both proteins cooperate in myoblast differentiation. Interacts with TTN/titin. Interacts (via ANK repeats) with TCAP; the interaction is direct. Interacts with TJP1 (via PDZ domains). Interacts with PML; the interaction is direct. Interacts with p53/TP53. Interacts with YBX1. Interacts with AKT2. Post-translationally, phosphorylation at Ser-99 by PKB/AKT2 in response to oxidative stress induces translocation to the nucleus and negatively regulates myoblast differentiation. In terms of tissue distribution, mostly expressed in skeletal and cardiac muscles. Found in slow fibers. Also expressed in kidney, but to a lower extent (at protein level).

It localises to the cytoplasm. It is found in the myofibril. The protein localises to the sarcomere. The protein resides in the i band. Its subcellular location is the cytosol. It localises to the nucleus. It is found in the PML body. Functions as a negative regulator of myocyte differentiation. May interact with both sarcoplasmic structural proteins and nuclear proteins to regulate gene expression during muscle development and in response to muscle stress. The sequence is that of Ankyrin repeat domain-containing protein 2 (ANKRD2) from Homo sapiens (Human).